A 423-amino-acid polypeptide reads, in one-letter code: MNLLKEVLKNQVYPAMGCTEPVSVALCAAYAAKELGKPVQKAVFYLDAGTFKNGLAVRIPNTSGERGNLLAGTAGLLIAKPQLKMEILKAATPSILKRAKQLIDDKKAFIKVAPCKKHFYIKVEVENGKDKASCVISDSHTTVSKLTKNGKVIFENKPSKKKEDNYKQLLGKATLKDLIALADNADNTDLKYIKKGVEMNLNACKEGKKLKKVGFFLESTVEKSILQKNLVTETKIMAARVADARMDGIAVPVMSSGESGNQGVVAILVPYNVGKKSKVKEEKILKSIAFSHLLNGYVKVYTGSLSPLCGCAIAAGVGAAGAIVYQQNGDLKKITLAINNIISDIGGMLCDGAKSGCALKVVSSVDSAIRAAYMGLNNYGITELEGFIGKTAEETIQNLGNISITGMCDVDAVIVDIMKKKVK.

It belongs to the UPF0597 family.

This Elusimicrobium minutum (strain Pei191) protein is UPF0597 protein Emin_0811.